The sequence spans 331 residues: 4-hydroxythreonine-4-phosphate dehydrogenase (331 aa).

Histidine 137 and threonine 138 together coordinate substrate. A divalent metal cation is bound by residues histidine 167, histidine 212, and histidine 267. The substrate site is built by lysine 275, asparagine 284, and arginine 293.

The protein belongs to the PdxA family. In terms of assembly, homodimer. Zn(2+) serves as cofactor. It depends on Mg(2+) as a cofactor. Requires Co(2+) as cofactor.

The protein localises to the cytoplasm. It carries out the reaction 4-(phosphooxy)-L-threonine + NAD(+) = 3-amino-2-oxopropyl phosphate + CO2 + NADH. It participates in cofactor biosynthesis; pyridoxine 5'-phosphate biosynthesis; pyridoxine 5'-phosphate from D-erythrose 4-phosphate: step 4/5. Catalyzes the NAD(P)-dependent oxidation of 4-(phosphooxy)-L-threonine (HTP) into 2-amino-3-oxo-4-(phosphooxy)butyric acid which spontaneously decarboxylates to form 3-amino-2-oxopropyl phosphate (AHAP). In Yersinia pseudotuberculosis serotype I (strain IP32953), this protein is 4-hydroxythreonine-4-phosphate dehydrogenase.